The following is a 218-amino-acid chain: MPMTLGYWNIRGLAHSIRLLLEYTDSSYEEKKYTMGDAPDYDRSQWLNEKFKLGLDFPNLPYLIDGTHKITQSNAILRYIARKHNLCGESEKEQIREDILENQFMDSRMQLAKLCYDPDFEKLKPEYLQALPEMLKLYSQFLGKQPWFLGDKITFVDFIAYDVLERNQVFEPSCLDAFPNLKDFISRFEGLEKISAYMKSSRFLPRPVFTKMAVWGNK.

In terms of domain architecture, GST N-terminal spans P2–G88. Y7 to W8 contributes to the glutathione binding site. A phosphoserine mark is found at S27 and S44. Residues R43–W46, K50, N59–L60, and Q72–S73 each bind glutathione. The 119-residue stretch at S90–V208 folds into the GST C-terminal domain. Y116 lines the substrate pocket.

This sequence belongs to the GST superfamily. Mu family. Homodimer. Muscle.

It is found in the cytoplasm. It catalyses the reaction RX + glutathione = an S-substituted glutathione + a halide anion + H(+). The catalysed reaction is 11(S)-hydroxy-14(S),15(S)-epoxy-(5Z,8Z,12E)-eicosatrienoate + glutathione = (11S,15S)-dihydroxy-14(R)-S-glutathionyl-(5Z,8Z,12E)-eicosatrienoate. In terms of biological role, conjugation of reduced glutathione to a wide number of exogenous and endogenous hydrophobic electrophiles. Participates in the formation of novel hepoxilin regioisomers. The protein is Glutathione S-transferase Mu 2 of Homo sapiens (Human).